Here is a 729-residue protein sequence, read N- to C-terminus: DNA gyrase subunit B, chloroplastic/mitochondrial (729 aa).

Residues 510-617 enclose the Toprim domain; it reads SEIFIVEGDS…RYQKALFDEG (108 aa). Residues glutamate 516, aspartate 590, and aspartate 592 each coordinate Mg(2+).

The protein belongs to the type II topoisomerase GyrB family. In terms of assembly, made up of two chains. The A chain is responsible for DNA breakage and rejoining; the B chain catalyzes ATP hydrolysis. It depends on Mg(2+) as a cofactor. Mn(2+) serves as cofactor. Requires Ca(2+) as cofactor.

Its subcellular location is the plastid. The protein localises to the chloroplast. It localises to the mitochondrion. The catalysed reaction is ATP-dependent breakage, passage and rejoining of double-stranded DNA.. In terms of biological role, a type II topoisomerase that negatively supercoils closed circular double-stranded DNA in an ATP-dependent manner. This is DNA gyrase subunit B, chloroplastic/mitochondrial (GYRB) from Oryza sativa subsp. japonica (Rice).